The following is a 100-amino-acid chain: MLYSKAREIYETKIKEAVFQFATTMRWTNDWEYSKNHKKPLVTRKAHMLVLIDREQIKAREALQNHKKAAFEWFMDNTAPETKKAVSAWFSGKNCERSFF.

This is an uncharacterized protein from Enterobacteria phage T4 (Bacteriophage T4).